The sequence spans 514 residues: ATP synthase subunit alpha (514 aa).

ATP is bound at residue 170 to 177 (GDRQIGKT).

This sequence belongs to the ATPase alpha/beta chains family. As to quaternary structure, F-type ATPases have 2 components, CF(1) - the catalytic core - and CF(0) - the membrane proton channel. CF(1) has five subunits: alpha(3), beta(3), gamma(1), delta(1), epsilon(1). CF(0) has three main subunits: a(1), b(2) and c(9-12). The alpha and beta chains form an alternating ring which encloses part of the gamma chain. CF(1) is attached to CF(0) by a central stalk formed by the gamma and epsilon chains, while a peripheral stalk is formed by the delta and b chains.

The protein resides in the cell inner membrane. It carries out the reaction ATP + H2O + 4 H(+)(in) = ADP + phosphate + 5 H(+)(out). Functionally, produces ATP from ADP in the presence of a proton gradient across the membrane. The alpha chain is a regulatory subunit. This chain is ATP synthase subunit alpha, found in Pseudomonas syringae pv. tomato (strain ATCC BAA-871 / DC3000).